Reading from the N-terminus, the 655-residue chain is Acetyl-coenzyme A synthetase (655 aa).

Residues 193–196 and Thr313 each bind CoA; that span reads RGNK. ATP contacts are provided by residues 389–391, 413–418, Asp502, and Arg517; these read GEP and DTWWQT. Ser525 is a binding site for CoA. Position 528 (Arg528) interacts with ATP. Residues Val539 and His541 each coordinate Mg(2+). Arg586 contributes to the CoA binding site. Residue Lys611 is modified to N6-acetyllysine.

This sequence belongs to the ATP-dependent AMP-binding enzyme family. Mg(2+) serves as cofactor. In terms of processing, acetylated. Deacetylation by the SIR2-homolog deacetylase activates the enzyme.

The enzyme catalyses acetate + ATP + CoA = acetyl-CoA + AMP + diphosphate. Its function is as follows. Catalyzes the conversion of acetate into acetyl-CoA (AcCoA), an essential intermediate at the junction of anabolic and catabolic pathways. AcsA undergoes a two-step reaction. In the first half reaction, AcsA combines acetate with ATP to form acetyl-adenylate (AcAMP) intermediate. In the second half reaction, it can then transfer the acetyl group from AcAMP to the sulfhydryl group of CoA, forming the product AcCoA. The polypeptide is Acetyl-coenzyme A synthetase (Psychrobacter cryohalolentis (strain ATCC BAA-1226 / DSM 17306 / VKM B-2378 / K5)).